We begin with the raw amino-acid sequence, 389 residues long: Zinc finger C2HC domain-containing protein 1C homolog (389 aa).

Disordered stretches follow at residues 16–44 (MLPH…SQQS) and 84–115 (SYPH…GPQS). 2 stretches are compositionally biased toward polar residues: residues 35-44 (YEQGDSSQQS) and 90-102 (GISQ…DSQG). Positions 211-266 (VQIRRLEAAGESLEEEIRRKQILLRGKLKKTEEELRRIQMQKEQAKENENRELQKI) form a coiled coil. 2 disordered regions span residues 301–320 (REDE…QLSD) and 343–389 (SELS…PQLG). Over residues 307–317 (GRSQQNSSPFQ) the composition is skewed to polar residues. A compositionally biased stretch (low complexity) spans 368 to 382 (SSLSMAPDSSGSSGS).

It belongs to the ZC2HC1 family.

This Pongo abelii (Sumatran orangutan) protein is Zinc finger C2HC domain-containing protein 1C homolog (ZC2HC1C).